We begin with the raw amino-acid sequence, 357 residues long: Golgi to ER traffic protein 2 (357 aa).

At 1 to 224 the chain is on the cytoplasmic side; the sequence is MSETTDKQLT…AKYHTYQEQL (224 aa). The span at 65-81 shows a compositional bias: low complexity; the sequence is TDTATVTDSSTNATSVS. A disordered region spans residues 65 to 99; the sequence is TDTATVTDSSTNATSVSPSAAKATPTSTGVSSAIS. Residues 88-98 are compositionally biased toward polar residues; sequence TPTSTGVSSAI. A helical membrane pass occupies residues 225 to 245; that stretch reads WQFRFLVVRILATIFNFAYHF. At 246-270 the chain is on the lumenal side; sequence ITIPSFTASNHAYVRDLSEVYPLLG. A helical membrane pass occupies residues 271 to 290; that stretch reads FMTIFTSIEVVIIATYYLLF. At 291–334 the chain is on the cytoplasmic side; the sequence is TKLGLFHASNQKSFILKGISTLSMFVPQLLRYEPLVATFLGYKE. A helical membrane pass occupies residues 335 to 355; it reads LLGIFVGDLSLVVVMFGLLSF. The Lumenal portion of the chain corresponds to 356–357; it reads SN.

It belongs to the GET2 family. In terms of assembly, component of the Golgi to ER traffic (GET) complex, which is composed of GET1, GET2 and GET3. Within the complex, GET1 and GET2 form a heterotetramer which is stabilized by phosphatidylinositol binding and which binds to the GET3 homodimer.

The protein resides in the endoplasmic reticulum membrane. It localises to the golgi apparatus membrane. Its function is as follows. Required for the post-translational delivery of tail-anchored (TA) proteins to the endoplasmic reticulum. Together with GET1, acts as a membrane receptor for soluble GET3, which recognizes and selectively binds the transmembrane domain of TA proteins in the cytosol. The GET complex cooperates with the HDEL receptor ERD2 to mediate the ATP-dependent retrieval of resident ER proteins that contain a C-terminal H-D-E-L retention signal from the Golgi to the ER. The chain is Golgi to ER traffic protein 2 from Lodderomyces elongisporus (strain ATCC 11503 / CBS 2605 / JCM 1781 / NBRC 1676 / NRRL YB-4239) (Yeast).